The following is a 239-amino-acid chain: Proteasome activator complex subunit 2 (239 aa).

Residue alanine 2 is modified to N-acetylalanine. Serine 10 is modified (phosphoserine). The disordered stretch occupies residues aspartate 65–lysine 86. Positions proline 72–lysine 86 are enriched in basic and acidic residues.

Belongs to the PA28 family. In terms of assembly, heterodimer of PSME1 and PSME2, which forms a hexameric ring.

Its function is as follows. Implicated in immunoproteasome assembly and required for efficient antigen processing. The PA28 activator complex enhances the generation of class I binding peptides by altering the cleavage pattern of the proteasome. This is Proteasome activator complex subunit 2 (PSME2) from Bos taurus (Bovine).